The primary structure comprises 756 residues: Protein SDA1 homolog (756 aa).

The stretch at 227–282 (EEEEDEAVKEKRAKDNFRKKSLAHRVGKKTKGRITRLAKSKVDLKKAKQEEDNKLQ) forms a coiled coil. Composition is skewed to acidic residues over residues 494–514 (AGEE…EGWE) and 521–596 (ADDD…EEEE). Disordered stretches follow at residues 494 to 615 (AGEE…VLRT) and 638 to 756 (AREN…RGRH). Residues 605 to 615 (QQKEKVEVLRT) are compositionally biased toward basic and acidic residues. A compositionally biased stretch (acidic residues) spans 647 to 656 (DMDQDDDENG). Over residues 677–691 (EEKLERIARAKEGRD) the composition is skewed to basic and acidic residues. Over residues 725-735 (KTKKVRGKSLK) the composition is skewed to basic residues. Positions 736–749 (SFRDKQIGQREHSA) are enriched in basic and acidic residues.

This sequence belongs to the SDA1 family.

The protein resides in the nucleus. It is found in the nucleolus. In terms of biological role, required for 60S pre-ribosomal subunits export to the cytoplasm. This is Protein SDA1 homolog (sdad1) from Dictyostelium discoideum (Social amoeba).